We begin with the raw amino-acid sequence, 268 residues long: Fibroblast growth factor 8 (268 aa).

The first 22 residues, 1–22 (MGSPRSALSCLLLHLLVLCLQA), serve as a signal peptide directing secretion. Pyrrolidone carboxylic acid is present on Gln23. Positions 29-87 (QKRGPGAGNPADTLGQGHEDRPFGQRSRAGKNFTNPAPNYPEEGSKEQRDSVLPKVTQR) are disordered. Asn60 carries an N-linked (GlcNAc...) asparagine glycan. A compositionally biased stretch (basic and acidic residues) spans 71 to 80 (EGSKEQRDSV). The N-linked (GlcNAc...) asparagine glycan is linked to Asn190.

This sequence belongs to the heparin-binding growth factors family. In terms of assembly, monomer. Homodimer. Interacts with FGFR1, FGFR2, FGFR3 and FGFR4. Affinity between fibroblast growth factors (FGFs) and their receptors is increased by heparan sulfate glycosaminoglycans that function as coreceptors. Post-translationally, the N-terminus is blocked. Absent in normal mammary glands and detected only in adult testis and ovary and in midgestational embryos.

It is found in the secreted. Plays an important role in the regulation of embryonic development, cell proliferation, cell differentiation and cell migration. Required for normal brain, eye, ear and limb development during embryogenesis. Required for normal development of the gonadotropin-releasing hormone (GnRH) neuronal system. Plays a role in neurite outgrowth in hippocampal cells. Cooperates with Wnt-1 in mouse mammary tumor virus-induced murine mammary tumorigenesis. The protein is Fibroblast growth factor 8 (Fgf8) of Mus musculus (Mouse).